Consider the following 508-residue polypeptide: Lysine--tRNA ligase (508 aa).

2 residues coordinate Mg(2+): Glu416 and Glu423.

It belongs to the class-II aminoacyl-tRNA synthetase family. As to quaternary structure, homodimer. Requires Mg(2+) as cofactor.

It is found in the cytoplasm. It carries out the reaction tRNA(Lys) + L-lysine + ATP = L-lysyl-tRNA(Lys) + AMP + diphosphate. The chain is Lysine--tRNA ligase from Prochlorococcus marinus (strain MIT 9303).